A 194-amino-acid chain; its full sequence is Leucyl/phenylalanyl-tRNA--protein transferase (194 aa).

The protein belongs to the L/F-transferase family.

It is found in the cytoplasm. The catalysed reaction is N-terminal L-lysyl-[protein] + L-leucyl-tRNA(Leu) = N-terminal L-leucyl-L-lysyl-[protein] + tRNA(Leu) + H(+). The enzyme catalyses N-terminal L-arginyl-[protein] + L-leucyl-tRNA(Leu) = N-terminal L-leucyl-L-arginyl-[protein] + tRNA(Leu) + H(+). It catalyses the reaction L-phenylalanyl-tRNA(Phe) + an N-terminal L-alpha-aminoacyl-[protein] = an N-terminal L-phenylalanyl-L-alpha-aminoacyl-[protein] + tRNA(Phe). In terms of biological role, functions in the N-end rule pathway of protein degradation where it conjugates Leu, Phe and, less efficiently, Met from aminoacyl-tRNAs to the N-termini of proteins containing an N-terminal arginine or lysine. The protein is Leucyl/phenylalanyl-tRNA--protein transferase of Chlorobium luteolum (strain DSM 273 / BCRC 81028 / 2530) (Pelodictyon luteolum).